The sequence spans 638 residues: 1,4-alpha-glucan branching enzyme GlgB (638 aa).

Asp-303 serves as the catalytic Nucleophile. Catalysis depends on Glu-356, which acts as the Proton donor.

This sequence belongs to the glycosyl hydrolase 13 family. GlgB subfamily. Monomer.

It carries out the reaction Transfers a segment of a (1-&gt;4)-alpha-D-glucan chain to a primary hydroxy group in a similar glucan chain.. It functions in the pathway glycan biosynthesis; glycogen biosynthesis. Functionally, catalyzes the formation of the alpha-1,6-glucosidic linkages in glycogen by scission of a 1,4-alpha-linked oligosaccharide from growing alpha-1,4-glucan chains and the subsequent attachment of the oligosaccharide to the alpha-1,6 position. This is 1,4-alpha-glucan branching enzyme GlgB from Lactobacillus acidophilus (strain ATCC 700396 / NCK56 / N2 / NCFM).